Reading from the N-terminus, the 304-residue chain is MWFKNLTLYRFNKPFAVETEALETALADFTFSPCSSQDVSKFGFSNALGKKGSSLVHSADNRHLICVTKEEKILPGQVIKEALEEKVALIEDEENRKMAKKEKDALKDEIITSLLPRAFSRRSQTHALILPELEMILVDSSSATKAEELLALLRKALGSLPVIPLSFKAPVESNLTEWLKLGSAPLPFEMQDEAELKSEADEGGIVRFKQQDLKEDEVLAHLATGKQVHKLALHFGQSIALLLQSDASVKRLKFSEEFRAGNDEVGTDDPMARLDADFALMGSELVALMHALVAALGGLEEAQV.

This sequence belongs to the RdgC family.

It localises to the cytoplasm. Its subcellular location is the nucleoid. May be involved in recombination. In Shewanella baltica (strain OS223), this protein is Recombination-associated protein RdgC.